The sequence spans 343 residues: C5a anaphylatoxin chemotactic receptor 2 (343 aa).

Residues Met1–Leu44 lie on the Extracellular side of the membrane. An N-linked (GlcNAc...) asparagine glycan is attached at Asn3. Residues Leu45–Trp67 form a helical membrane-spanning segment. Topologically, residues Lys68–Trp78 are cytoplasmic. A helical membrane pass occupies residues Phe79–Ala101. Residues Gln102–Thr120 lie on the Extracellular side of the membrane. A disulfide bridge connects residues Cys113 and Cys192. Residues Val121–Phe143 traverse the membrane as a helical segment. At Arg144 to Cys155 the chain is on the cytoplasmic side. The chain crosses the membrane as a helical span at residues Gly156–Tyr178. The Extracellular portion of the chain corresponds to Arg179–Thr208. The chain crosses the membrane as a helical span at residues Val209 to Arg231. Residues Gln232–Ala243 are Cytoplasmic-facing. Residues Val244–Ser266 form a helical membrane-spanning segment. Topologically, residues Ser267 to Pro280 are extracellular. The chain crosses the membrane as a helical span at residues Leu281–Phe300. Residues Gly301 to Val343 are Cytoplasmic-facing. Phosphoserine is present on Ser326.

This sequence belongs to the G-protein coupled receptor 1 family. As to quaternary structure, interacts with C3 (the anaphylatoxin peptide C3a and the adipogenic hormone ASP); the interaction occurs with higher affinity for ASP, enhancing the phosphorylation and activation of GPR77, recruitment of ARRB2 to the cell surface and endocytosis of GRP77.

It localises to the cell membrane. Receptor for the chemotactic and inflammatory C3a, C4a and C5a anaphylatoxin peptides and also for their dearginated forms ASP/C3adesArg, C4adesArg and C5adesArg respectively. Couples weakly to G(i)-mediated signaling pathways. The chain is C5a anaphylatoxin chemotactic receptor 2 (C5ar2) from Rattus norvegicus (Rat).